The primary structure comprises 470 residues: Uronate isomerase (470 aa).

This sequence belongs to the metallo-dependent hydrolases superfamily. Uronate isomerase family.

The enzyme catalyses D-glucuronate = D-fructuronate. It carries out the reaction aldehydo-D-galacturonate = keto-D-tagaturonate. Its pathway is carbohydrate metabolism; pentose and glucuronate interconversion. This chain is Uronate isomerase, found in Salmonella heidelberg (strain SL476).